A 368-amino-acid chain; its full sequence is 3-dehydroquinate synthase (368 aa).

Residues 71–76 (DGESFK), 105–109 (GVIGD), 129–130 (TT), Lys-142, Lys-151, and 169–172 (TLRT) each bind NAD(+). Glu-184, His-247, and His-264 together coordinate Zn(2+).

Belongs to the sugar phosphate cyclases superfamily. Dehydroquinate synthase family. It depends on NAD(+) as a cofactor. Co(2+) is required as a cofactor. Requires Zn(2+) as cofactor.

Its subcellular location is the cytoplasm. The catalysed reaction is 7-phospho-2-dehydro-3-deoxy-D-arabino-heptonate = 3-dehydroquinate + phosphate. Its pathway is metabolic intermediate biosynthesis; chorismate biosynthesis; chorismate from D-erythrose 4-phosphate and phosphoenolpyruvate: step 2/7. Functionally, catalyzes the conversion of 3-deoxy-D-arabino-heptulosonate 7-phosphate (DAHP) to dehydroquinate (DHQ). In Ralstonia nicotianae (strain ATCC BAA-1114 / GMI1000) (Ralstonia solanacearum), this protein is 3-dehydroquinate synthase.